Consider the following 162-residue polypeptide: MSVDVAIIMGSQSDWETMHHAADTLEALGISFDARIVSAHRTPDRLVAFAKGAKAEGFKVIIAGAGGAAHLPGMAAAMTPLPVFGVPVQSKALSGQDSLLSIVQMPAGIPVGTLAIGRAGAVNAALLAAAVLALYDEALAARLDEWRKAQTESVAERPSNEA.

Substrate is bound by residues Ser11, Asp14, and Arg41.

Belongs to the AIR carboxylase family. Class I subfamily.

The catalysed reaction is 5-carboxyamino-1-(5-phospho-D-ribosyl)imidazole + H(+) = 5-amino-1-(5-phospho-D-ribosyl)imidazole-4-carboxylate. It functions in the pathway purine metabolism; IMP biosynthesis via de novo pathway; 5-amino-1-(5-phospho-D-ribosyl)imidazole-4-carboxylate from 5-amino-1-(5-phospho-D-ribosyl)imidazole (N5-CAIR route): step 2/2. Its function is as follows. Catalyzes the conversion of N5-carboxyaminoimidazole ribonucleotide (N5-CAIR) to 4-carboxy-5-aminoimidazole ribonucleotide (CAIR). The sequence is that of N5-carboxyaminoimidazole ribonucleotide mutase from Brucella melitensis biotype 1 (strain ATCC 23456 / CCUG 17765 / NCTC 10094 / 16M).